A 186-amino-acid chain; its full sequence is Ribosome-recycling factor (186 aa).

The protein belongs to the RRF family.

It is found in the cytoplasm. Functionally, responsible for the release of ribosomes from messenger RNA at the termination of protein biosynthesis. May increase the efficiency of translation by recycling ribosomes from one round of translation to another. The protein is Ribosome-recycling factor of Bacteroides fragilis (strain ATCC 25285 / DSM 2151 / CCUG 4856 / JCM 11019 / LMG 10263 / NCTC 9343 / Onslow / VPI 2553 / EN-2).